Here is a 431-residue protein sequence, read N- to C-terminus: DNA polymerase delta subunit 3 (431 aa).

Positions 64-80 are necessary for function, possibly resulting from its inability to interact with PolD2; that stretch reads QGSDSGEDLYSVVLESR. A disordered region spans residues 128-431; it reads PGAGKIVPSA…AGIMNFFSKK (304 aa). The segment covering 156 to 171 has biased composition (low complexity); that stretch reads SKSAVKLEPSKSSLKS. Composition is skewed to basic and acidic residues over residues 172-200 and 252-271; these read EPAKSKAEKPVASKSSPEDKKTSPKEQAS and SPPESEDKSKKDASNSNKKE. The segment covering 278 to 290 has biased composition (low complexity); that stretch reads PSPTKKPTTANTS. The segment covering 294–307 has biased composition (acidic residues); that stretch reads FDEESAESSDEEEK. 2 stretches are compositionally biased toward basic and acidic residues: residues 308–328 and 343–362; these read LDMLRRKVIESDNDSDQEKAS and QPPKKSADEETIALDEKMDT. The span at 387–411 shows a compositional bias: low complexity; sequence PANKKVSPKAAAPVNKKKSPPSAAK.

As to quaternary structure, component of both the DNA polymerase delta and DNA polymerase zeta complexes. The DNA polymerase delta complex consists of three subunits: the catalytic subunit PolD1 and two accessory subunits PolD2/Pol31 and PolD3/Pol32. Within the delta complex, interacts with both PolD1 and PolD2. Component of the DNA polymerase zeta complex consisting of four subunits: the catalytic subunit PolZ1 and three accessory subunits PolZ2/Rev7, PolD2/Pol31 and PolD3/Pol32. Expressed in ovaries (at the protein level). Expressed in ovaries.

The protein localises to the nucleus. The protein resides in the nucleoplasm. Accessory component of the DNA polymerase delta complex and possibly the DNA polymerase zeta complex. As a component of the delta complex, participates in high fidelity genome replication, including lagging strand synthesis, DNA recombination and repair. Required to recruit the DNA polymerase delta complex to the nucleus of rapidly dividing embryonic cells, and as a consequence is essential for genome replication during the earliest cell cycles. Increases the efficiency and processivity of DNA synthesis of the DNA polymerases during mitotic DNA replication and repair. During development this function is essential for preventing replication stress that results in the formation of chromosomal fragile sites (CFS) such as chromosomal breaks. Ensures genomic stability by promoting several types of DNA repair mechanisms including repairing broken dicentric chromosomes through homolog-dependent break-induced replication (BIR). During homologous recombination (HR) repair, required for maintaining the processivity of the delta complex during break-induced replication; a form of HR that requires extensive DNA synthesis such as the repair of large gaps. Able to suppress position effect variegation and may therefore have a role in the induction of chromatin state changes that likely include its activities in DNA replication and repair. This is DNA polymerase delta subunit 3 from Drosophila melanogaster (Fruit fly).